Here is a 317-residue protein sequence, read N- to C-terminus: MHNYLDFEKPISDLEGKIIELKKLATEDESIDTTDEIGRLEVRVREAILEIYSKLNAWQKTQVARHPQRPHFVDYAKTLFQEFTPLAGDRKFSEDAAIQAGLARFRGQPVAVIGQEKGNDTKSRLKHNFGSPRPEGYRKAIRILEMADRFGLPVISLVDTAGAYPGVGAEERGQAEAIARSTEMCLGVKVPLVSVVIGEGGSGGAIAIATGNRVYMLEHSIYSVISPEGAASILWRDSTRAREAATNMKITAEDLKSLGVIDGIISEPLGGAHRDPDSVIAATGDVIANALAEMSSRSGEQLRNERRQKFLNMGRNL.

The CoA carboxyltransferase C-terminal domain maps to 40 to 293 (LEVRVREAIL…GDVIANALAE (254 aa)).

This sequence belongs to the AccA family. In terms of assembly, acetyl-CoA carboxylase is a heterohexamer composed of biotin carboxyl carrier protein (AccB), biotin carboxylase (AccC) and two subunits each of ACCase subunit alpha (AccA) and ACCase subunit beta (AccD).

Its subcellular location is the cytoplasm. It carries out the reaction N(6)-carboxybiotinyl-L-lysyl-[protein] + acetyl-CoA = N(6)-biotinyl-L-lysyl-[protein] + malonyl-CoA. The protein operates within lipid metabolism; malonyl-CoA biosynthesis; malonyl-CoA from acetyl-CoA: step 1/1. Its function is as follows. Component of the acetyl coenzyme A carboxylase (ACC) complex. First, biotin carboxylase catalyzes the carboxylation of biotin on its carrier protein (BCCP) and then the CO(2) group is transferred by the carboxyltransferase to acetyl-CoA to form malonyl-CoA. In Rhizobium etli (strain CIAT 652), this protein is Acetyl-coenzyme A carboxylase carboxyl transferase subunit alpha.